A 418-amino-acid polypeptide reads, in one-letter code: Trans-acting enoyl reductase (418 aa).

This sequence belongs to the saccharopine dehydrogenase family. Enoyl reductase subfamily.

In terms of biological role, involved in the reduction of the double bond between C-4 and C-5 during phthiocerol dimycocerosates (DIM A) and glycosylated phenolphthiocerol dimycocerosates (PGL) biosynthesis. The chain is Trans-acting enoyl reductase from Mycobacterium ulcerans (strain Agy99).